The primary structure comprises 244 residues: 5-oxoprolinase subunit A (244 aa).

It belongs to the LamB/PxpA family. In terms of assembly, forms a complex composed of PxpA, PxpB and PxpC.

It carries out the reaction 5-oxo-L-proline + ATP + 2 H2O = L-glutamate + ADP + phosphate + H(+). Its function is as follows. Catalyzes the cleavage of 5-oxoproline to form L-glutamate coupled to the hydrolysis of ATP to ADP and inorganic phosphate. This Escherichia coli (strain K12) protein is 5-oxoprolinase subunit A.